The primary structure comprises 452 residues: Pup--protein ligase (452 aa).

Position 9 (Glu9) interacts with Mg(2+). Arg53 is a binding site for ATP. Tyr55 serves as a coordination point for Mg(2+). Residue Asp57 is the Proton acceptor of the active site. Residue Glu63 coordinates Mg(2+). Positions 66 and 419 each coordinate ATP.

Belongs to the Pup ligase/Pup deamidase family. Pup-conjugating enzyme subfamily.

It carries out the reaction ATP + [prokaryotic ubiquitin-like protein]-L-glutamate + [protein]-L-lysine = ADP + phosphate + N(6)-([prokaryotic ubiquitin-like protein]-gamma-L-glutamyl)-[protein]-L-lysine.. The protein operates within protein degradation; proteasomal Pup-dependent pathway. It functions in the pathway protein modification; protein pupylation. Catalyzes the covalent attachment of the prokaryotic ubiquitin-like protein modifier Pup to the proteasomal substrate proteins, thereby targeting them for proteasomal degradation. This tagging system is termed pupylation. The ligation reaction involves the side-chain carboxylate of the C-terminal glutamate of Pup and the side-chain amino group of a substrate lysine. The polypeptide is Pup--protein ligase (Geodermatophilus obscurus (strain ATCC 25078 / DSM 43160 / JCM 3152 / CCUG 61914 / KCC A-0152 / KCTC 9177 / NBRC 13315 / NRRL B-3577 / G-20)).